Consider the following 252-residue polypeptide: 3-deoxy-manno-octulosonate cytidylyltransferase (252 aa).

This sequence belongs to the KdsB family.

The protein resides in the cytoplasm. The enzyme catalyses 3-deoxy-alpha-D-manno-oct-2-ulosonate + CTP = CMP-3-deoxy-beta-D-manno-octulosonate + diphosphate. The protein operates within nucleotide-sugar biosynthesis; CMP-3-deoxy-D-manno-octulosonate biosynthesis; CMP-3-deoxy-D-manno-octulosonate from 3-deoxy-D-manno-octulosonate and CTP: step 1/1. It functions in the pathway bacterial outer membrane biogenesis; lipopolysaccharide biosynthesis. Activates KDO (a required 8-carbon sugar) for incorporation into bacterial lipopolysaccharide in Gram-negative bacteria. This Xylella fastidiosa (strain Temecula1 / ATCC 700964) protein is 3-deoxy-manno-octulosonate cytidylyltransferase.